Here is a 268-residue protein sequence, read N- to C-terminus: AN1-type zinc finger protein 1 (268 aa).

Ala-2 carries the post-translational modification N-acetylalanine. 2 AN1-type zinc fingers span residues Leu-4–Glu-52 and Glu-58–Pro-106. The Zn(2+) site is built by Cys-10, Cys-15, Cys-25, Cys-28, Cys-33, His-36, His-42, Cys-44, Cys-64, Cys-69, Cys-79, Cys-82, Cys-87, His-90, His-96, and Cys-98. The ubiquitin-like stretch occupies residues Gln-160–Leu-260.

Associates with the 26S proteasome; this association occurs upon exposure to arsenite and is reduced in the presence of ATP. Interacts (via AN1-type 1 and 2 zinc fingers) with PSMD1; this interaction is increased upon arsenite treatment and occurs in an ATP-independent manner. Interacts with PSMC4. Interacts with PSMA1. Interacts (via its ubiquitin-like region) with VCP; this interaction occurs in an arsenite-dependent manner and is necessary for the recruitment of the ubiquitin-selective ATPase VCP to stress granules (SGs).

Its subcellular location is the cytoplasm. The protein localises to the stress granule. Functionally, plays a role in the regulation of cytoplasmic stress granules (SGs) turnover. SGs are dynamic and transient cytoplasmic ribonucleoprotein assemblies important for cellular protein homeostasis when protein production is suspended after acute exogenous stress. Associates with SGs and is involved in the efficient and specific arsenite-induced clearance process of SGs through the recruitment of the ubiquitin-selective ATPase VCP and the 26S proteasome. This process requires both complexes for efficient degradation of damaged ubiquitinated SG proteins during recovery from arsenite stress, and hence avoiding aberrant cytoplasmic SGs degradation via autophagy. The protein is AN1-type zinc finger protein 1 of Mus musculus (Mouse).